The primary structure comprises 64 residues: Orcokinin peptides (64 aa).

2 consecutive propeptides follow at residues 1–6 (MNIRPG) and 23–24 (NI).

This sequence belongs to the orcokinin family. In terms of tissue distribution, orcokinin-3 is expressed throughout the central nervous system (at protein level).

The protein localises to the secreted. Functionally, myotropic peptides. The chain is Orcokinin peptides from Camponotus floridanus (Florida carpenter ant).